The following is a 767-amino-acid chain: Serine/threonine-protein kinase DCLK2 (767 aa).

A disordered region spans residues 1 to 44; it reads MASTRSIELEHFEERDKRPRPGSRRGAPSSSGGSSISGPKGNGL. The span at 7–19 shows a compositional bias: basic and acidic residues; the sequence is IELEHFEERDKRP. Low complexity predominate over residues 24-43; it reads RRGAPSSSGGSSISGPKGNG. A Phosphothreonine modification is found at threonine 61. Doublecortin domains are found at residues 72–158 and 196–279; these read KKAR…VDYT and KLVT…AQDD. The segment covering 301-311 has biased composition (low complexity); it reads KYSGSRSPGLS. Positions 301-391 are disordered; sequence KYSGSRSPGL…GPELDRCMSP (91 aa). The span at 327 to 338 shows a compositional bias: polar residues; sequence SAYSTAKSPVNG. Low complexity predominate over residues 339 to 362; it reads TPSSQLSTPKSTKSSSSSPTSPGS. Over residues 369-380 the composition is skewed to polar residues; that stretch reads ISAQGRSSSNVN. Serine 377 is modified (phosphoserine). A Protein kinase domain is found at 409–666; sequence YRIGKVIGDG…AGEILSHPWV (258 aa). Residues 415 to 423 and lysine 438 each bind ATP; that span reads IGDGNFAVV. The active-site Proton acceptor is aspartate 530. Serine 662 is modified (phosphoserine). A Phosphothreonine modification is found at threonine 681. The span at 721 to 734 shows a compositional bias: basic and acidic residues; sequence HCRDSSKSSREQTS. Residues 721–767 form a disordered region; sequence HCRDSSKSSREQTSAREAPPPPESPRPPGPPATSGCDPAGTWRRHRD. The segment covering 738–751 has biased composition (pro residues); it reads APPPPESPRPPGPP.

Belongs to the protein kinase superfamily. CAMK Ser/Thr protein kinase family. CaMK subfamily. Interacts with MAPK8IP1/JIP-1, MAPK8IP2/JIP-2, MAPK9/JNK2, PPP1R9B/NEURABIN-2 and actin. Binds to and stabilizes microtubules; binding affinity is strongly reduced by autophosphorylation. Post-translationally, autophosphorylated.

It is found in the cytoplasm. It localises to the cytoskeleton. The catalysed reaction is L-seryl-[protein] + ATP = O-phospho-L-seryl-[protein] + ADP + H(+). The enzyme catalyses L-threonyl-[protein] + ATP = O-phospho-L-threonyl-[protein] + ADP + H(+). Its function is as follows. Protein kinase with a significantly reduced Ca(2+)+/CAM affinity and dependence compared to other members of the CaMK family. May play a role in the down-regulation of CRE-dependent gene activation probably by phosphorylation of the CREB coactivator CRTC2/TORC2 and the resulting retention of TORC2 in the cytoplasm. The sequence is that of Serine/threonine-protein kinase DCLK2 (Dclk2) from Rattus norvegicus (Rat).